Reading from the N-terminus, the 522-residue chain is Cytochrome P450 4F4 (522 aa).

Transmembrane regions (helical) follow at residues 15–35 (TSLPWLLLLLIGASWLLVRVL) and 87–107 (GFMTWLGPILPIITLCHPDVI). The heme site is built by Glu328 and Cys468.

It belongs to the cytochrome P450 family. Heme serves as cofactor. In terms of tissue distribution, expressed in hepatocytes. High expression in liver and kidney. Lower expression in brain.

The protein localises to the endoplasmic reticulum membrane. It localises to the microsome membrane. The catalysed reaction is (5Z,8Z,11Z,14Z)-eicosatetraenoate + reduced [NADPH--hemoprotein reductase] + O2 = 20-hydroxy-(5Z,8Z,11Z,14Z)-eicosatetraenoate + oxidized [NADPH--hemoprotein reductase] + H2O + H(+). It catalyses the reaction leukotriene B4 + reduced [NADPH--hemoprotein reductase] + O2 = 20-hydroxy-leukotriene B4 + oxidized [NADPH--hemoprotein reductase] + H2O + H(+). It carries out the reaction 6-trans-leukotriene B4 + reduced [NADPH--hemoprotein reductase] + O2 = 20-hydroxy-6-trans-leukotriene B4 + oxidized [NADPH--hemoprotein reductase] + H2O + H(+). The enzyme catalyses prostaglandin A1 + reduced [NADPH--hemoprotein reductase] + O2 = 20-hydroxy prostaglandin A1 + oxidized [NADPH--hemoprotein reductase] + H2O + H(+). The catalysed reaction is prostaglandin E1 + reduced [NADPH--hemoprotein reductase] + O2 = 20-hydroxy prostaglandin E1 + oxidized [NADPH--hemoprotein reductase] + H2O + H(+). In terms of biological role, a cytochrome P450 monooxygenase involved in the metabolism of arachidonic acid and its oxygenated derivatives. Mechanistically, uses molecular oxygen inserting one oxygen atom into a substrate, and reducing the second into a water molecule, with two electrons provided by NADPH via cytochrome P450 reductase (CPR; NADPH-ferrihemoprotein reductase). Participates in the conversion of arachidonic acid to omega-hydroxyeicosatetraenoic acid (20-HETE), a signaling molecule acting both as vasoconstrictive and natriuretic with overall effect on arterial blood pressure. Hydroxylates the terminal carbon (omega-hydroxylation) of inflammatory lipid mediators, including prostaglandin (PG) A1, PGE1 and leukotriene B4 (LTB4), and may play a role in inactivation of these oxylipins during the resolution of inflammation. The polypeptide is Cytochrome P450 4F4 (Rattus norvegicus (Rat)).